Reading from the N-terminus, the 235-residue chain is Small ribosomal subunit protein uS3 (235 aa).

Residues 39-107 form the KH type-2 domain; that stretch reads VRKFLNKELM…PAQINIAEVK (69 aa).

This sequence belongs to the universal ribosomal protein uS3 family. In terms of assembly, part of the 30S ribosomal subunit. Forms a tight complex with proteins S10 and S14.

Its function is as follows. Binds the lower part of the 30S subunit head. Binds mRNA in the 70S ribosome, positioning it for translation. The polypeptide is Small ribosomal subunit protein uS3 (Actinobacillus succinogenes (strain ATCC 55618 / DSM 22257 / CCUG 43843 / 130Z)).